A 447-amino-acid polypeptide reads, in one-letter code: MPNEQLRRMDAFTFPSYSIDLATGEALFDYALTGPDGEQRFTEVITLPLPAEPPSDATVATLGRVLELLHVVAGVSYYKAAAPRRLVLPAPLGEAAAALVTAVYTKGLAEYAYRNQLPHVLELTPEIPAGSVPPAREYDNSDLRPLSAVGGGKDSIVSLEALRRAGLDPVPFSVNPNHVIVAVNEASGLAPLAARRRIDPVLFDLNAAGARNGHIPVTAINSLIAVATAVLNRLGPVVMSNERSASDPNLVWNGHEINHQWSKGVEAEGLLRAALAEHAGLTEPYFSLLRSLSELHIARLFAQIDRYDDVVTSCNAAFKLRDASERWCRDCPKCRFVFLAMAPFMPRERVVHIFGGDLLADETQIPGYRELLGVDGHKPFECVGEVEESVVALSLLAEQDQWRDAPVVRALVDAVPETAWSAAATSDVFTPGGPHHIPPPYAKALAQ.

The protein belongs to the MurL family.

The enzyme catalyses UDP-N-acetyl-alpha-D-muramoyl-L-alanyl-L-glutamate + ATP + H2O = UDP-N-acetyl-alpha-D-muramoyl-L-alanyl-D-glutamate + AMP + diphosphate + H(+). It participates in cell wall biogenesis; peptidoglycan biosynthesis. Cell wall formation. Catalyzes epimerization of the terminal L-glutamate in UDP-N-acetyl-alpha-D-muramoyl-L-alanyl-L-glutamate. In Micromonospora sp. (strain ATCC 39149 / NRRL 15099 / SCC 1413), this protein is UDP-N-acetyl-alpha-D-muramoyl-L-alanyl-L-glutamate epimerase.